Reading from the N-terminus, the 418-residue chain is Serine hydroxymethyltransferase (418 aa).

Residues leucine 121 and 125–127 (GHL) each bind (6S)-5,6,7,8-tetrahydrofolate. Residue lysine 230 is modified to N6-(pyridoxal phosphate)lysine. A (6S)-5,6,7,8-tetrahydrofolate-binding site is contributed by 356-358 (SPF).

Belongs to the SHMT family. Homodimer. Pyridoxal 5'-phosphate is required as a cofactor.

Its subcellular location is the cytoplasm. The catalysed reaction is (6R)-5,10-methylene-5,6,7,8-tetrahydrofolate + glycine + H2O = (6S)-5,6,7,8-tetrahydrofolate + L-serine. It functions in the pathway one-carbon metabolism; tetrahydrofolate interconversion. The protein operates within amino-acid biosynthesis; glycine biosynthesis; glycine from L-serine: step 1/1. Functionally, catalyzes the reversible interconversion of serine and glycine with tetrahydrofolate (THF) serving as the one-carbon carrier. This reaction serves as the major source of one-carbon groups required for the biosynthesis of purines, thymidylate, methionine, and other important biomolecules. Also exhibits THF-independent aldolase activity toward beta-hydroxyamino acids, producing glycine and aldehydes, via a retro-aldol mechanism. This chain is Serine hydroxymethyltransferase, found in Shewanella woodyi (strain ATCC 51908 / MS32).